The chain runs to 470 residues: Amino-acid permease RocC (470 aa).

12 helical membrane passes run 18–38 (FMIA…GFTI), 44–64 (LGAI…MLCL), 90–110 (GFMI…LELT), 119–139 (WLPS…IFLI), 159–179 (VAAI…LIDF), 196–216 (GLFP…NFSF), 243–263 (VIWR…AILP), 281–301 (IGIP…ILSV), 338–358 (ALLI…MAAE), 360–380 (VYLW…MSIC), 409–429 (LVPI…IFIP), and 433–453 (IGLY…HLSI).

Belongs to the amino acid-polyamine-organocation (APC) superfamily.

It is found in the cell membrane. Its function is as follows. Putative transport protein involved in arginine degradative pathway. Probably transports arginine or ornithine. The polypeptide is Amino-acid permease RocC (rocC) (Bacillus subtilis (strain 168)).